The chain runs to 552 residues: Protoheme IX farnesyltransferase, mitochondrial (552 aa).

A disordered region spans residues 118–185 (AADIPPSTST…PSGEIPPDAS (68 aa)). A compositionally biased stretch (low complexity) spans 150–168 (EQAASASSNAPSEAAQTTP). 8 helical membrane-spanning segments follow: residues 215-235 (LTMLVVLSAMVPYALYPVPDF), 245-267 (LSPLTLLFLTTGTTLCSAAANAL), 296-316 (AAVCFALFCATTGILALQFGV), 318-338 (PTVAFLGAANIVLYAGIYTPL), 346-366 (TWVGAVVGGIPPLMGWAAAAG), 387-407 (AGGWLFAALLFTWQFPHFMAL), 441-461 (VFVPLCVGLCAVGVTEWSFAV), and 487-507 (ARGLFWASVWHLPVVMVLALL).

This sequence belongs to the UbiA prenyltransferase family.

Its subcellular location is the mitochondrion membrane. The catalysed reaction is heme b + (2E,6E)-farnesyl diphosphate + H2O = Fe(II)-heme o + diphosphate. In terms of biological role, converts protoheme IX and farnesyl diphosphate to heme O. The protein is Protoheme IX farnesyltransferase, mitochondrial (COX10) of Pyricularia oryzae (strain 70-15 / ATCC MYA-4617 / FGSC 8958) (Rice blast fungus).